The chain runs to 397 residues: MAKAKFERTKPHVNIGTIGHIDHGKTTLTAAITKVLHDQHPDLNPYMPFDEIDKAPEEKARGITISIAHVEYQTEARHYAHVDCPGHADYIKNMITGAAQMDGAILVVAATDGPMPQTREHVLLARQVGVPYIVVALNKSDMVDDEELLELVELEVRELLSSQEYPGDDLPVVRVSALKALEGDPEWAGKLMELMTAVDTSIPQPERETEKPFLMPIEDVFTITGRGTVVTGRAERGILKPNEEVELVGIREKSTKTTCTGIEMFRKLLDEARAGENVGLLLRGVKREDVERGMVVIKPGTATPHTEFEATVYILSKEEGGRHTPFFQNYRPQFYFRTTDVTGVVTLPEGTEMVMPGDNTTMTVKLIQPIAMEENLKFAIREGGRTVGAGRVTKIIK.

One can recognise a tr-type G domain in the interval 10–206; that stretch reads KPHVNIGTIG…AVDTSIPQPE (197 aa). The tract at residues 19-26 is G1; that stretch reads GHIDHGKT. A GTP-binding site is contributed by 19–26; the sequence is GHIDHGKT. Threonine 26 contacts Mg(2+). The segment at 62 to 66 is G2; sequence GITIS. A G3 region spans residues 83–86; it reads DCPG. GTP contacts are provided by residues 83 to 87 and 138 to 141; these read DCPGH and NKSD. A G4 region spans residues 138-141; sequence NKSD. Residues 176 to 178 form a G5 region; that stretch reads SAL.

This sequence belongs to the TRAFAC class translation factor GTPase superfamily. Classic translation factor GTPase family. EF-Tu/EF-1A subfamily. As to quaternary structure, monomer.

Its subcellular location is the cytoplasm. It carries out the reaction GTP + H2O = GDP + phosphate + H(+). Its function is as follows. GTP hydrolase that promotes the GTP-dependent binding of aminoacyl-tRNA to the A-site of ribosomes during protein biosynthesis. The chain is Elongation factor Tu from Salinispora arenicola (strain CNS-205).